Consider the following 361-residue polypeptide: Phosphoserine aminotransferase (361 aa).

L-glutamate is bound at residue R42. Residues 76–77 (AR), W102, T153, D173, and Q196 contribute to the pyridoxal 5'-phosphate site. K197 is modified (N6-(pyridoxal phosphate)lysine). Position 238–239 (238–239 (NT)) interacts with pyridoxal 5'-phosphate.

Belongs to the class-V pyridoxal-phosphate-dependent aminotransferase family. SerC subfamily. As to quaternary structure, homodimer. Requires pyridoxal 5'-phosphate as cofactor.

Its subcellular location is the cytoplasm. The catalysed reaction is O-phospho-L-serine + 2-oxoglutarate = 3-phosphooxypyruvate + L-glutamate. The enzyme catalyses 4-(phosphooxy)-L-threonine + 2-oxoglutarate = (R)-3-hydroxy-2-oxo-4-phosphooxybutanoate + L-glutamate. The protein operates within amino-acid biosynthesis; L-serine biosynthesis; L-serine from 3-phospho-D-glycerate: step 2/3. It functions in the pathway cofactor biosynthesis; pyridoxine 5'-phosphate biosynthesis; pyridoxine 5'-phosphate from D-erythrose 4-phosphate: step 3/5. Functionally, catalyzes the reversible conversion of 3-phosphohydroxypyruvate to phosphoserine and of 3-hydroxy-2-oxo-4-phosphonooxybutanoate to phosphohydroxythreonine. The sequence is that of Phosphoserine aminotransferase from Yersinia enterocolitica serotype O:8 / biotype 1B (strain NCTC 13174 / 8081).